Reading from the N-terminus, the 505-residue chain is Deoxyguanosinetriphosphate triphosphohydrolase (505 aa).

One can recognise an HD domain in the interval 66–273; the sequence is RLTHSMEVQQ…MEAADDISYC (208 aa).

It belongs to the dGTPase family. Type 1 subfamily. In terms of assembly, homotetramer. Mg(2+) serves as cofactor.

The catalysed reaction is dGTP + H2O = 2'-deoxyguanosine + triphosphate + H(+). Functionally, dGTPase preferentially hydrolyzes dGTP over the other canonical NTPs. In Escherichia coli O127:H6 (strain E2348/69 / EPEC), this protein is Deoxyguanosinetriphosphate triphosphohydrolase.